A 230-amino-acid chain; its full sequence is UPF0500 protein C1orf216 homolog (230 aa).

Residues 1-103 (MFAAIQPGLA…AEPEKLSGAS (103 aa)) are disordered. Positions 60-73 (RSSSESPSDNQVFQ) are enriched in polar residues. A compositionally biased stretch (low complexity) spans 85-94 (PPEGAEIPGA).

Belongs to the UPF0500 family.

The polypeptide is UPF0500 protein C1orf216 homolog (Mus musculus (Mouse)).